The sequence spans 1247 residues: F-box/WD repeat-containing protein A (1247 aa).

In terms of domain architecture, START spans 1–214; sequence MQYVNGNDIS…PATVSGRLAK (214 aa). 2 disordered regions span residues 484-514 and 552-576; these read GNKD…DNII and QQPQ…KEIK. The span at 552–566 shows a compositional bias: low complexity; the sequence is QQPQQQQQQPQEQQQ. The F-box domain occupies 631–677; it reads NSGFDNLPEEVVQIIFSNLSAINIVNLSLVCKRFKMATDSPILWKNL. Disordered stretches follow at residues 697–744 and 833–856; these read SNLS…QQQQ and GQES…KRDN. Low complexity-rich tracts occupy residues 707 to 719 and 726 to 744; these read NSNS…GSSS and QQQN…QQQQ. A compositionally biased stretch (polar residues) spans 833-846; sequence GQESPINKNSSDNP. WD repeat units follow at residues 895-934, 945-984, 988-1025, 1029-1073, 1076-1114, 1119-1158, and 1218-1247; these read GHNR…GDYE, DHTQ…IEVI, RPTN…LLWN, AHTK…CINT, GHSY…TFIS, KHTG…LSNI, and NHES…RWDF.

Component of an SCF complex including at least culA. Formation of this complex appears to require activity of the MAP kinase erk2. Interacts with regA.

Its function is as follows. Substrate recognition component of a SCF (SKP1-CUL1-F-box protein) E3 ubiquitin-protein ligase complex which mediates the ubiquitination and subsequent proteasomal degradation of target proteins. May target the cAMP phosphodiesterase regA for degradation leading to an increase in cAMP and PKA activity. Promotes development of prestalk cells as opposed to prespores within the developing fruiting body. Required for culmination and fruiting body development. The sequence is that of F-box/WD repeat-containing protein A (fbxA) from Dictyostelium discoideum (Social amoeba).